We begin with the raw amino-acid sequence, 341 residues long: UDP-N-acetylglucosamine--N-acetylmuramyl-(pentapeptide) pyrophosphoryl-undecaprenol N-acetylglucosamine transferase (341 aa).

Residues Thr-10–Gly-12, Asn-124, Ser-177, and Gln-275 each bind UDP-N-acetyl-alpha-D-glucosamine.

The protein belongs to the glycosyltransferase 28 family. MurG subfamily.

Its subcellular location is the cell inner membrane. It catalyses the reaction di-trans,octa-cis-undecaprenyl diphospho-N-acetyl-alpha-D-muramoyl-L-alanyl-D-glutamyl-meso-2,6-diaminopimeloyl-D-alanyl-D-alanine + UDP-N-acetyl-alpha-D-glucosamine = di-trans,octa-cis-undecaprenyl diphospho-[N-acetyl-alpha-D-glucosaminyl-(1-&gt;4)]-N-acetyl-alpha-D-muramoyl-L-alanyl-D-glutamyl-meso-2,6-diaminopimeloyl-D-alanyl-D-alanine + UDP + H(+). The protein operates within cell wall biogenesis; peptidoglycan biosynthesis. In terms of biological role, cell wall formation. Catalyzes the transfer of a GlcNAc subunit on undecaprenyl-pyrophosphoryl-MurNAc-pentapeptide (lipid intermediate I) to form undecaprenyl-pyrophosphoryl-MurNAc-(pentapeptide)GlcNAc (lipid intermediate II). This chain is UDP-N-acetylglucosamine--N-acetylmuramyl-(pentapeptide) pyrophosphoryl-undecaprenol N-acetylglucosamine transferase, found in Campylobacter hominis (strain ATCC BAA-381 / DSM 21671 / CCUG 45161 / LMG 19568 / NCTC 13146 / CH001A).